The following is a 247-amino-acid chain: 4-hydroxy-tetrahydrodipicolinate reductase (247 aa).

Residues 9–14 (GAAGRM), 76–78 (GTT), and 103–106 (APNF) each bind NAD(+). The active-site Proton donor/acceptor is His-133. A (S)-2,3,4,5-tetrahydrodipicolinate-binding site is contributed by His-134. The Proton donor role is filled by Lys-137. 143–144 (GT) serves as a coordination point for (S)-2,3,4,5-tetrahydrodipicolinate.

The protein belongs to the DapB family.

It localises to the cytoplasm. The catalysed reaction is (S)-2,3,4,5-tetrahydrodipicolinate + NAD(+) + H2O = (2S,4S)-4-hydroxy-2,3,4,5-tetrahydrodipicolinate + NADH + H(+). It carries out the reaction (S)-2,3,4,5-tetrahydrodipicolinate + NADP(+) + H2O = (2S,4S)-4-hydroxy-2,3,4,5-tetrahydrodipicolinate + NADPH + H(+). It functions in the pathway amino-acid biosynthesis; L-lysine biosynthesis via DAP pathway; (S)-tetrahydrodipicolinate from L-aspartate: step 4/4. Its function is as follows. Catalyzes the conversion of 4-hydroxy-tetrahydrodipicolinate (HTPA) to tetrahydrodipicolinate. In Beutenbergia cavernae (strain ATCC BAA-8 / DSM 12333 / CCUG 43141 / JCM 11478 / NBRC 16432 / NCIMB 13614 / HKI 0122), this protein is 4-hydroxy-tetrahydrodipicolinate reductase.